A 299-amino-acid polypeptide reads, in one-letter code: MGQFNQTEKGSFEIKVALAEMLKGGVIMDVTNSEQAKIAEDAGAVAVMALERIPSDIRVQGGIARMSNPELIQKIQETVSIPVMAKCRIGHFVEAQILESLQVDFIDESEVLTPADEENHIDKHIFKVPFVCGCRDLGEALRRIGEGAAMIRTKGEAGTGNVVEAVRHMRAINREIRHLMLMDSSELMAEAKRLGAPFHLVQMVAKSGVLPVPNFAAGGIATPADAALMMQLGAQSVFVGSGIFKSEDPAKRARAIVGATTFFQNPEKLAQFSMDLLDAMKGIDIRQLKREDLMAQRGW.

Aspartate 29 serves as a coordination point for D-ribose 5-phosphate. The active-site Schiff-base intermediate with D-ribose 5-phosphate is lysine 86. Glycine 158 is a binding site for D-ribose 5-phosphate. Position 170 (arginine 170) interacts with D-glyceraldehyde 3-phosphate. D-ribose 5-phosphate is bound by residues glycine 219 and 240 to 241; that span reads GS.

The protein belongs to the PdxS/SNZ family. In the presence of PdxT, forms a dodecamer of heterodimers.

The catalysed reaction is aldehydo-D-ribose 5-phosphate + D-glyceraldehyde 3-phosphate + L-glutamine = pyridoxal 5'-phosphate + L-glutamate + phosphate + 3 H2O + H(+). The protein operates within cofactor biosynthesis; pyridoxal 5'-phosphate biosynthesis. In terms of biological role, catalyzes the formation of pyridoxal 5'-phosphate from ribose 5-phosphate (RBP), glyceraldehyde 3-phosphate (G3P) and ammonia. The ammonia is provided by the PdxT subunit. Can also use ribulose 5-phosphate and dihydroxyacetone phosphate as substrates, resulting from enzyme-catalyzed isomerization of RBP and G3P, respectively. The sequence is that of Pyridoxal 5'-phosphate synthase subunit PdxS from Protochlamydia amoebophila (strain UWE25).